The following is a 316-amino-acid chain: Acetylglutamate kinase (316 aa).

Residues 65 to 66, arginine 87, and asparagine 179 contribute to the substrate site; that span reads GG.

Belongs to the acetylglutamate kinase family. ArgB subfamily.

Its subcellular location is the cytoplasm. It catalyses the reaction N-acetyl-L-glutamate + ATP = N-acetyl-L-glutamyl 5-phosphate + ADP. It participates in amino-acid biosynthesis; L-arginine biosynthesis; N(2)-acetyl-L-ornithine from L-glutamate: step 2/4. In terms of biological role, catalyzes the ATP-dependent phosphorylation of N-acetyl-L-glutamate. In Alkaliphilus metalliredigens (strain QYMF), this protein is Acetylglutamate kinase.